We begin with the raw amino-acid sequence, 463 residues long: Annexin A7 (463 aa).

Pro residues-rich tracts occupy residues Met-1–Pro-18 and Phe-26–Phe-38. Disordered regions lie at residues Met-1–Tyr-54 and Gly-71–Thr-153. Residues Met-1–Pro-140 are repeat-rich region. The tract at residues Gly-5 to Thr-20 is 3 X 5 AA tandem repeats of G-Y-P-P-X. The span at Gly-86–Phe-99 shows a compositional bias: gly residues. 4 Annexin repeats span residues Phe-160–Met-231, Pro-232–Gln-303, Gln-315–Gln-387, and Asn-391–Gly-462. Lys-208 carries the post-translational modification N6-acetyllysine.

This sequence belongs to the annexin family. As to quaternary structure, interacts with PDCD6.

Its function is as follows. Calcium/phospholipid-binding protein which promotes membrane fusion and is involved in exocytosis. The chain is Annexin A7 (ANXA7) from Bos taurus (Bovine).